Reading from the N-terminus, the 137-residue chain is Basic phospholipase A2 homolog W6D49 (137 aa).

The first 16 residues, 1–16 (MRTLWILAVLLVSVDG), serve as a signal peptide directing secretion. 7 disulfide bridges follow: C42–C131, C44–C60, C59–C111, C65–C137, C66–C104, C73–C97, and C91–C102. Residues 121-133 (KKQQFNTGIFCSK) are important for membrane-damaging activities in eukaryotes and bacteria; heparin-binding.

As to quaternary structure, monomer. Expressed by the venom gland.

It is found in the secreted. With respect to regulation, heparin reduces its edema-inducing activity. In terms of biological role, snake venom phospholipase A2 homolog that lacks enzymatic activity. Shows myotoxin activities and displays edema-inducing activities. A model of myotoxic mechanism has been proposed: an apo Lys49-PLA2 is activated by the entrance of a hydrophobic molecule (e.g. fatty acid) at the hydrophobic channel of the protein leading to a reorientation of a monomer. This reorientation causes a transition between 'inactive' to 'active' states, causing alignment of C-terminal and membrane-docking sites (MDoS) side-by-side and putting the membrane-disruption sites (MDiS) in the same plane, exposed to solvent and in a symmetric position for both monomers. The MDoS region stabilizes the toxin on membrane by the interaction of charged residues with phospholipid head groups. Subsequently, the MDiS region destabilizes the membrane with penetration of hydrophobic residues. This insertion causes a disorganization of the membrane, allowing an uncontrolled influx of ions (i.e. calcium and sodium), and eventually triggering irreversible intracellular alterations and cell death. The polypeptide is Basic phospholipase A2 homolog W6D49 (Calloselasma rhodostoma (Malayan pit viper)).